The sequence spans 358 residues: Dynein axonemal assembly factor 10 (358 aa).

WD repeat units lie at residues 64–106, 116–155, 163–206, 208–250, 258–298, and 320–358; these read EKPK…TPVY, NCID…TPVA, ETKR…VRWE, NIKN…PSKG, AHKS…QRSR, and LSTQ…LNKL.

In terms of assembly, interacts with PIH1D1; the interaction associates DNAAF10 with the R2TP complex. Interacts with several dynein axonemal assembly factors.

The protein resides in the dynein axonemal particle. Functionally, key assembly factor specifically required for the stability of axonemal dynein heavy chains in cytoplasm. This Xenopus tropicalis (Western clawed frog) protein is Dynein axonemal assembly factor 10 (dnaaf10).